The sequence spans 492 residues: Cytochrome P450 2L1 (492 aa).

C436 lines the heme pocket.

The protein belongs to the cytochrome P450 family. Heme is required as a cofactor.

The protein localises to the endoplasmic reticulum membrane. It is found in the microsome membrane. The enzyme catalyses an organic molecule + reduced [NADPH--hemoprotein reductase] + O2 = an alcohol + oxidized [NADPH--hemoprotein reductase] + H2O + H(+). Functionally, efficient in catalyzing the monooxygenation of benzphetamine, aminopyrine, benzo(a)pyrene, progesterone, and testosterone. This is Cytochrome P450 2L1 (CYP2L1) from Panulirus argus (Caribbean spiny lobster).